The chain runs to 205 residues: Holliday junction branch migration complex subunit RuvA (205 aa).

A domain I region spans residues 1 to 64 (MIGKLKGTID…EDQLKLFGFM (64 aa)). Residues 65 to 143 (SALEREWFNL…AFTGDAGSAI (79 aa)) form a domain II region. The segment at 144–153 (GLKQELGEGV) is flexible linker. The tract at residues 153 to 205 (VASAPVSDAVSALTNLGYSRDQAANAIAAALKNGGEGADSAKLIRLGLKELSR) is domain III.

This sequence belongs to the RuvA family. As to quaternary structure, homotetramer. Forms an RuvA(8)-RuvB(12)-Holliday junction (HJ) complex. HJ DNA is sandwiched between 2 RuvA tetramers; dsDNA enters through RuvA and exits via RuvB. An RuvB hexamer assembles on each DNA strand where it exits the tetramer. Each RuvB hexamer is contacted by two RuvA subunits (via domain III) on 2 adjacent RuvB subunits; this complex drives branch migration. In the full resolvosome a probable DNA-RuvA(4)-RuvB(12)-RuvC(2) complex forms which resolves the HJ.

It is found in the cytoplasm. The RuvA-RuvB-RuvC complex processes Holliday junction (HJ) DNA during genetic recombination and DNA repair, while the RuvA-RuvB complex plays an important role in the rescue of blocked DNA replication forks via replication fork reversal (RFR). RuvA specifically binds to HJ cruciform DNA, conferring on it an open structure. The RuvB hexamer acts as an ATP-dependent pump, pulling dsDNA into and through the RuvAB complex. HJ branch migration allows RuvC to scan DNA until it finds its consensus sequence, where it cleaves and resolves the cruciform DNA. The sequence is that of Holliday junction branch migration complex subunit RuvA from Allorhizobium ampelinum (strain ATCC BAA-846 / DSM 112012 / S4) (Agrobacterium vitis (strain S4)).